A 624-amino-acid chain; its full sequence is NADPH-dependent diflavin oxidoreductase 1 (624 aa).

The 163-residue stretch at 6-168 folds into the Flavodoxin-like domain; the sequence is IVILYGSETG…VYYEFEKRII (163 aa). FMN-binding positions include 12–17, 59–62, 106–115, and Glu142; these read SETGNA, STTG, and LGDSSYPRFN. The region spanning 226–474 is the FAD-binding FR-type domain; it reads ETIRHGTVKK…LQNNHLLHED (249 aa). FAD contacts are provided by residues Arg384, 414–417, and 446–449; these read RFYS and GLCT. Residues 539 to 540 and 548 to 552 contribute to the NADP(+) site; these read SR and AKYVQ. Trp624 is an FAD binding site.

It belongs to the NADPH-dependent diflavin oxidoreductase NDOR1 family. In the N-terminal section; belongs to the flavodoxin family. This sequence in the C-terminal section; belongs to the flavoprotein pyridine nucleotide cytochrome reductase family. As to quaternary structure, interacts with DRE2; as part of the cytosolic iron-sulfur (Fe-S) protein assembly (CIA) machinery. FAD is required as a cofactor. FMN serves as cofactor.

It localises to the cytoplasm. The protein resides in the mitochondrion. It carries out the reaction 2 oxidized [2Fe-2S]-[protein] + NADPH = 2 reduced [2Fe-2S]-[protein] + NADP(+) + H(+). Its function is as follows. NADPH-dependent reductase which is a central component of the cytosolic iron-sulfur (Fe-S) protein assembly (CIA) machinery. Transfers electrons from NADPH via its FAD and FMN prosthetic groups to the [2Fe-2S] cluster of DRE2, another key component of the CIA machinery. In turn, this reduced cluster provides electrons for assembly of cytosolic iron-sulfur cluster proteins. Positively controls H(2)O(2)-induced cell death. The protein is NADPH-dependent diflavin oxidoreductase 1 of Kluyveromyces lactis (strain ATCC 8585 / CBS 2359 / DSM 70799 / NBRC 1267 / NRRL Y-1140 / WM37) (Yeast).